Reading from the N-terminus, the 269-residue chain is Membrane protein insertase YidC 1 (269 aa).

The first 20 residues, 1–20 (MKKKFSLIAMAGAALLLLTA), serve as a signal peptide directing secretion. Cys21 is lipidated: N-palmitoyl cysteine. A lipid anchor (S-diacylglycerol cysteine) is attached at Cys21. 4 consecutive transmembrane segments (helical) span residues 45 to 65 (IRFL…TIVI), 124 to 144 (YMGC…YQAL), 165 to 185 (PTFI…YLMM), and 203 to 223 (PIFI…YWVI).

The protein belongs to the OXA1/ALB3/YidC family. Type 2 subfamily.

Its subcellular location is the cell membrane. Required for the insertion and/or proper folding and/or complex formation of integral membrane proteins into the membrane. Involved in integration of membrane proteins that insert both dependently and independently of the Sec translocase complex, as well as at least some lipoproteins. The protein is Membrane protein insertase YidC 1 of Lactococcus lactis subsp. lactis (strain IL1403) (Streptococcus lactis).